The primary structure comprises 166 residues: Phospholipase A2 inhibitor clone 06/08 (166 aa).

The N-terminal stretch at M1–G19 is a signal peptide. Residues L46–E161 form the C-type lectin domain. N-linked (GlcNAc...) asparagine glycosylation is found at N61 and N122. Intrachain disulfides connect C83–C160 and C138–C152.

It belongs to the alpha-type phospholipase A2 inhibitor family. In terms of assembly, homotrimer; non-covalently linked. Expressed by the liver.

The protein localises to the secreted. Its function is as follows. This phospholipase A2 inhibitor binds directly phospholipase A2 in the presence or absence of calcium. The chain is Phospholipase A2 inhibitor clone 06/08 from Bothrops neuwiedi (Neuwied's lancehead).